The following is a 680-amino-acid chain: Probable ATP-dependent RNA helicase pitchoune (680 aa).

The tract at residues 1 to 168 is disordered; sequence MSIREKLLMK…GKPAKDDEPF (168 aa). Polar residues predominate over residues 29–42; sequence KNAQKQEPPKQNGN. The segment covering 59 to 69 has biased composition (acidic residues); it reads DEDDDLEEDFQ. A compositionally biased stretch (basic residues) spans 74-83; that stretch reads PKKKQQKQPP. The span at 95-141 shows a compositional bias: acidic residues; it reads SESDDDEQEDEADEDSDLDEVAEVDEEDVDSGSEDDDQQEDEDEEEP. Residues 187–215 carry the Q motif motif; that stretch reads FASLKGAVSEATLRAIKEMGFTEMTEIQS. Residues 218–393 form the Helicase ATP-binding domain; it reads LTPLLKGRDL…KLALKSEPIY (176 aa). 231-238 is a binding site for ATP; the sequence is AQTGSGKT. A DEVD box motif is present at residues 341–344; that stretch reads DEVD. A Helicase C-terminal domain is found at 407–577; the sequence is GLEQGYIVCP…DIQLQLEKLI (171 aa). A disordered region spans residues 659–680; the sequence is GSASKQRHFKQVNRDQAKKFMR. Basic and acidic residues predominate over residues 670-680; it reads VNRDQAKKFMR.

This sequence belongs to the DEAD box helicase family. DDX18/HAS1 subfamily.

The protein localises to the nucleus. It is found in the nucleolus. The enzyme catalyses ATP + H2O = ADP + phosphate + H(+). Probable RNA-dependent helicase. Functions in cell growth and proliferation. May have a role in ribosome biogenesis and, consequently, in protein biosynthesis. In Drosophila melanogaster (Fruit fly), this protein is Probable ATP-dependent RNA helicase pitchoune (pit).